We begin with the raw amino-acid sequence, 319 residues long: Beta-ketoacyl-[acyl-carrier-protein] synthase III (319 aa).

Active-site residues include cysteine 113 and histidine 246. Residues 247 to 251 are ACP-binding; it reads QANLR. Asparagine 276 is an active-site residue.

Belongs to the thiolase-like superfamily. FabH family. Homodimer.

The protein resides in the cytoplasm. It catalyses the reaction malonyl-[ACP] + acetyl-CoA + H(+) = 3-oxobutanoyl-[ACP] + CO2 + CoA. Its pathway is lipid metabolism; fatty acid biosynthesis. Catalyzes the condensation reaction of fatty acid synthesis by the addition to an acyl acceptor of two carbons from malonyl-ACP. Catalyzes the first condensation reaction which initiates fatty acid synthesis and may therefore play a role in governing the total rate of fatty acid production. Possesses both acetoacetyl-ACP synthase and acetyl transacylase activities. Its substrate specificity determines the biosynthesis of branched-chain and/or straight-chain of fatty acids. This is Beta-ketoacyl-[acyl-carrier-protein] synthase III from Chromobacterium violaceum (strain ATCC 12472 / DSM 30191 / JCM 1249 / CCUG 213 / NBRC 12614 / NCIMB 9131 / NCTC 9757 / MK).